Here is a 136-residue protein sequence, read N- to C-terminus: ATP synthase epsilon chain (136 aa).

Belongs to the ATPase epsilon chain family. In terms of assembly, F-type ATPases have 2 components, CF(1) - the catalytic core - and CF(0) - the membrane proton channel. CF(1) has five subunits: alpha(3), beta(3), gamma(1), delta(1), epsilon(1). CF(0) has three main subunits: a, b and c.

The protein resides in the cellular thylakoid membrane. Produces ATP from ADP in the presence of a proton gradient across the membrane. The polypeptide is ATP synthase epsilon chain (Parasynechococcus marenigrum (strain WH8102)).